We begin with the raw amino-acid sequence, 63 residues long: Large ribosomal subunit protein uL30 (63 aa).

The protein belongs to the universal ribosomal protein uL30 family. In terms of assembly, part of the 50S ribosomal subunit.

The protein is Large ribosomal subunit protein uL30 of Rickettsia africae (strain ESF-5).